Here is a 365-residue protein sequence, read N- to C-terminus: 3-isopropylmalate dehydrogenase (365 aa).

80–91 (GPKWGTGEVRPE) contacts NAD(+). Residues arginine 98, arginine 108, arginine 137, and aspartate 226 each contribute to the substrate site. Aspartate 226, aspartate 251, and aspartate 255 together coordinate Mg(2+). NAD(+) is bound at residue 290–301 (GSAPDLPKNKVN).

The protein belongs to the isocitrate and isopropylmalate dehydrogenases family. In terms of assembly, homodimer. Mg(2+) serves as cofactor. The cofactor is Mn(2+).

It is found in the cytoplasm. It carries out the reaction (2R,3S)-3-isopropylmalate + NAD(+) = 4-methyl-2-oxopentanoate + CO2 + NADH. It functions in the pathway amino-acid biosynthesis; L-leucine biosynthesis; L-leucine from 3-methyl-2-oxobutanoate: step 3/4. In terms of biological role, catalyzes the oxidation of 3-carboxy-2-hydroxy-4-methylpentanoate (3-isopropylmalate) to 3-carboxy-4-methyl-2-oxopentanoate. The product decarboxylates to 4-methyl-2 oxopentanoate. In Candida boidinii (Yeast), this protein is 3-isopropylmalate dehydrogenase (LEU2).